The sequence spans 958 residues: MTQTLSQLENQGEFIRRHIGSSAEQQKEMLATVGASSLNDLTQKIVPRDIALPEPPDVGGGATEQQALAELKAIASQNKRYQSYIGMGYAPAVLPPVILRNLLENPGWYTAYTPYQPEVSQGRLESLLNFQQVTIDLTGLDIASASLLDEATAAAEAMAMAKRISKLKNADRFFVADDIHPQTLDVVRTRAETFGFDVIVDKAEKVLELDGVFGVLLQQVGTTGEVHDYADLIAQLKQRKIIVSVAADLMALLLLTAPGKQGADMVFGSAQRFGVPMGYGGPHAAFFASRDEFKRSMPGRIIGVSRDAAGNTALRMAMQTREQHIRREKANSNICTAQVLLANIAAMYAVYHGSKGLKRIAGRIHRLTDILAVGLQKAGFTLRYKTWFDTLTVEVADKAAVLARAEKAEINLRTDTYGAVGITLSEATRRDDVIKLFSVLTGTDDKLDVEALDKELMTESHSIPASMLRSDEILLHPNFNRYHSETDMMRYMHRLERRDLALNQAMIPLGSCTMKLNAAAEMLPISWPEFNELHPFCPPEQAQGYQQMISQLSHWLVQLTGYDVVCMQPNSGAQGEYAGLLAIRRYHESRGEGHRHICLIPSSAHGTNPASAHMAGMTVVVVSCDKEGNIDLVDLREKAEESGNELSCIMVTYPSTHGVYEETIRQVCEIIHQYGGQVYLDGANMNAQVGITAPGFIGADVSHLNLHKTFCIPHGGGGPGMGPIGVKAHLAPFLPGHSVVQMDGLTEQRAVSAAPFGSASILPISWMYIRMMGSQGLKQASQTAILNANYIAARLKNDYDVLYTGHNGYVAHECILDIRPLKEEFGISEMDIAKRLIDYGFHAPTMSFPVAGTLMVEPTESESKVEIDRFVDAMLAIRAEIGKVAKGEWSLEDNPLVNAPHVQAELVSDWSHSYSRETAVFPTLETKANKYWPAVKRLDDVYGDRNLHCSCAPVSDYQ.

N6-(pyridoxal phosphate)lysine is present on lysine 708.

The protein belongs to the GcvP family. The glycine cleavage system is composed of four proteins: P, T, L and H. Pyridoxal 5'-phosphate is required as a cofactor.

It carries out the reaction N(6)-[(R)-lipoyl]-L-lysyl-[glycine-cleavage complex H protein] + glycine + H(+) = N(6)-[(R)-S(8)-aminomethyldihydrolipoyl]-L-lysyl-[glycine-cleavage complex H protein] + CO2. Functionally, the glycine cleavage system catalyzes the degradation of glycine. The P protein binds the alpha-amino group of glycine through its pyridoxal phosphate cofactor; CO(2) is released and the remaining methylamine moiety is then transferred to the lipoamide cofactor of the H protein. This is Glycine dehydrogenase (decarboxylating) from Photorhabdus laumondii subsp. laumondii (strain DSM 15139 / CIP 105565 / TT01) (Photorhabdus luminescens subsp. laumondii).